The sequence spans 65 residues: Bacteriocin amylovorin-L (65 aa).

Residues 1 to 15 constitute a propeptide that is removed on maturation; that stretch reads MKQLNSEQLQNIIGG. Residues 39 to 59 traverse the membrane as a helical segment; that stretch reads LGGVWGAVIGGVGGAAVCGLA.

In terms of assembly, active lactobin is composed of two different peptides, one which is lactobin A.

It localises to the secreted. Its subcellular location is the host cell membrane. In terms of biological role, this heat stable bacteriocin inhibits the growth of closely related Lactobacillus species. It may act as a pore-forming protein, creating a channel in the cell membrane. It kills Lactobacillus helveticus ATCC 15009, but displays no activity towards Listeria species. The chain is Bacteriocin amylovorin-L (amyL) from Lactobacillus amylovorus.